We begin with the raw amino-acid sequence, 209 residues long: Yop proteins translocation protein K (209 aa).

Functionally, belongs to an operon involved in the translocation of Yop proteins across the bacterial membranes or in the specific control of this function. This is Yop proteins translocation protein K (yscK) from Yersinia pseudotuberculosis serotype I (strain IP32953).